Here is a 778-residue protein sequence, read N- to C-terminus: Probable protein kinase DDB_G0291133 (778 aa).

Residues 129-162 (LSINNNNNNNNNNGGYKIPSSVNKNSNNYNSNSN) are disordered. Residues 177–462 (FDVVCKLGSG…LDQILLNENI (286 aa)) enclose the Protein kinase domain. Residues 183-191 (LGSGSFSDV) and Lys-206 each bind ATP. The active-site Proton acceptor is Asp-303. Residues Asn-308 and Asp-321 each coordinate Mg(2+). Disordered regions lie at residues 478 to 509 (NIEN…DDNN), 562 to 697 (HFVR…GFYG), and 757 to 778 (SHPQ…QETN). Acidic residues predominate over residues 578–590 (SDEEEDDDDDDDS). Positions 599 to 651 (SLNNLNNSSSNIGISESNSNNSFSSILEENNESSSSSPLPSLSFSRRLSTSSL) are enriched in low complexity. Residues 652 to 670 (VTTISPKPNFNTSGNKLFS) show a composition bias toward polar residues. Over residues 671–693 (NENNNSNNNNNNNNNNQNNNNNN) the composition is skewed to low complexity. The span at 757-766 (SHPQESDKMS) shows a compositional bias: basic and acidic residues.

The protein belongs to the protein kinase superfamily. Ser/Thr protein kinase family. WEE1 subfamily.

It carries out the reaction L-seryl-[protein] + ATP = O-phospho-L-seryl-[protein] + ADP + H(+). The enzyme catalyses L-threonyl-[protein] + ATP = O-phospho-L-threonyl-[protein] + ADP + H(+). This is Probable protein kinase DDB_G0291133 from Dictyostelium discoideum (Social amoeba).